Consider the following 550-residue polypeptide: Glucose-6-phosphate isomerase (550 aa).

D-glucose 6-phosphate is bound by residues 164-165, 215-220, glutamine 359, glutamate 363, and histidine 394; these read GS and SKTFTT. The Proton donor role is filled by glutamate 363. The active site involves histidine 394. Threonine 455 bears the Phosphothreonine mark. Residue lysine 516 coordinates D-glucose 6-phosphate. Residue lysine 516 is part of the active site.

It belongs to the GPI family. Homodimer.

The protein resides in the cytoplasm. It is found in the cytosol. The catalysed reaction is alpha-D-glucose 6-phosphate = beta-D-fructose 6-phosphate. The protein operates within carbohydrate degradation; glycolysis; D-glyceraldehyde 3-phosphate and glycerone phosphate from D-glucose: step 2/4. Its function is as follows. In the cytoplasm, catalyzes the conversion of glucose-6-phosphate to fructose-6-phosphate, the second step in glycolysis, and the reverse reaction during gluconeogenesis. The chain is Glucose-6-phosphate isomerase (pgi1) from Schizosaccharomyces pombe (strain 972 / ATCC 24843) (Fission yeast).